The sequence spans 282 residues: NADPH-dependent 7-cyano-7-deazaguanine reductase (282 aa).

Residue 88-90 (IES) participates in substrate binding. Residue 90-91 (SK) participates in NADPH binding. The Thioimide intermediate role is filled by C190. The active-site Proton donor is the D197. 229–230 (HE) serves as a coordination point for substrate. An NADPH-binding site is contributed by 258 to 259 (RG).

It belongs to the GTP cyclohydrolase I family. QueF type 2 subfamily. As to quaternary structure, homodimer.

Its subcellular location is the cytoplasm. It catalyses the reaction 7-aminomethyl-7-carbaguanine + 2 NADP(+) = 7-cyano-7-deazaguanine + 2 NADPH + 3 H(+). It functions in the pathway tRNA modification; tRNA-queuosine biosynthesis. In terms of biological role, catalyzes the NADPH-dependent reduction of 7-cyano-7-deazaguanine (preQ0) to 7-aminomethyl-7-deazaguanine (preQ1). The protein is NADPH-dependent 7-cyano-7-deazaguanine reductase of Escherichia coli O81 (strain ED1a).